A 238-amino-acid chain; its full sequence is Uridylate kinase (238 aa).

10-13 (KFSG) contributes to the ATP binding site. Residues 18 to 23 (GGNGFG) form an involved in allosteric activation by GTP region. Gly52 contacts UMP. 2 residues coordinate ATP: Gly53 and Arg57. UMP contacts are provided by residues Asp73 and 134 to 141 (TGNPFFTT). ATP-binding residues include Thr161, Tyr167, and Asp170.

Belongs to the UMP kinase family. Homohexamer.

It localises to the cytoplasm. The catalysed reaction is UMP + ATP = UDP + ADP. It participates in pyrimidine metabolism; CTP biosynthesis via de novo pathway; UDP from UMP (UMPK route): step 1/1. With respect to regulation, allosterically activated by GTP. Inhibited by UTP. In terms of biological role, catalyzes the reversible phosphorylation of UMP to UDP. This is Uridylate kinase from Campylobacter fetus subsp. fetus (strain 82-40).